Reading from the N-terminus, the 177-residue chain is Thymidine kinase (177 aa).

Residue 11 to 18 (GPMFSGKS) coordinates ATP. Glu83 (proton acceptor) is an active-site residue. Position 113 (Phe113) interacts with substrate. 2 residues coordinate Zn(2+): Cys138 and Cys141. 157 to 161 (IEIIG) is a substrate binding site. Residues Cys170 and Cys173 each coordinate Zn(2+).

The protein belongs to the thymidine kinase family. Homotetramer. Two molecules of substrate bind to each enzyme tetramer.

It catalyses the reaction thymidine + ATP = dTMP + ADP + H(+). Functionally, phosphorylates thymidine and thymidine analogs, such as azidothymidine (AZT). Part of the salvage pathway for pyrimidine deoxyribonucleotide synthesis. The sequence is that of Thymidine kinase (OPG101) from Vaccinia virus (strain Copenhagen) (VACV).